Reading from the N-terminus, the 892-residue chain is DNA mismatch repair protein MutS (892 aa).

607–614 (GPNMSGKS) serves as a coordination point for ATP.

This sequence belongs to the DNA mismatch repair MutS family.

Its function is as follows. This protein is involved in the repair of mismatches in DNA. It is possible that it carries out the mismatch recognition step. This protein has a weak ATPase activity. The protein is DNA mismatch repair protein MutS of Bacillus cereus (strain G9842).